Here is a 457-residue protein sequence, read N- to C-terminus: Siroheme synthase (457 aa).

The interval 1-204 (MDHLPIFCQL…ADEKAVNATT (204 aa)) is precorrin-2 dehydrogenase /sirohydrochlorin ferrochelatase. NAD(+) contacts are provided by residues 22–23 (DV) and 43–44 (LT). A Phosphoserine modification is found at S128. The uroporphyrinogen-III C-methyltransferase stretch occupies residues 216-457 (GEVVLVGAGP…RDKLNWFSNY (242 aa)). P225 lines the S-adenosyl-L-methionine pocket. The active-site Proton acceptor is D248. Residue K270 is the Proton donor of the active site. Residues 301–303 (GGD), I306, 331–332 (TA), M382, and G411 each bind S-adenosyl-L-methionine.

The protein in the N-terminal section; belongs to the precorrin-2 dehydrogenase / sirohydrochlorin ferrochelatase family. In the C-terminal section; belongs to the precorrin methyltransferase family.

The enzyme catalyses uroporphyrinogen III + 2 S-adenosyl-L-methionine = precorrin-2 + 2 S-adenosyl-L-homocysteine + H(+). It catalyses the reaction precorrin-2 + NAD(+) = sirohydrochlorin + NADH + 2 H(+). The catalysed reaction is siroheme + 2 H(+) = sirohydrochlorin + Fe(2+). The protein operates within cofactor biosynthesis; adenosylcobalamin biosynthesis; precorrin-2 from uroporphyrinogen III: step 1/1. Its pathway is cofactor biosynthesis; adenosylcobalamin biosynthesis; sirohydrochlorin from precorrin-2: step 1/1. It participates in porphyrin-containing compound metabolism; siroheme biosynthesis; precorrin-2 from uroporphyrinogen III: step 1/1. It functions in the pathway porphyrin-containing compound metabolism; siroheme biosynthesis; siroheme from sirohydrochlorin: step 1/1. The protein operates within porphyrin-containing compound metabolism; siroheme biosynthesis; sirohydrochlorin from precorrin-2: step 1/1. Multifunctional enzyme that catalyzes the SAM-dependent methylations of uroporphyrinogen III at position C-2 and C-7 to form precorrin-2 via precorrin-1. Then it catalyzes the NAD-dependent ring dehydrogenation of precorrin-2 to yield sirohydrochlorin. Finally, it catalyzes the ferrochelation of sirohydrochlorin to yield siroheme. The protein is Siroheme synthase of Salmonella dublin (strain CT_02021853).